The primary structure comprises 2150 residues: Zinc finger protein sdc-3 (2150 aa).

The segment at 443-987 (QEITSPMFAL…DQVENEEPER (545 aa)) is dosage compensation domain 1. Disordered regions lie at residues 874–894 (EKEWHEMRAAQRAQKEKEEED), 1261–1373 (GSVV…GPEV), 1411–1448 (FETSPVPAPEGNIPSRAHSSDDDVQVISSETDPNGPIN), and 1491–1670 (EVLQ…SEKL). Positions 1267-1293 (TNQQEENVTSEGPTLQEGSSIPSSSHI) are enriched in polar residues. The segment covering 1321–1333 (KKSGKTTRGRPKK) has biased composition (basic residues). Basic and acidic residues predominate over residues 1347-1357 (GQKEEAAHEPE). Residues 1504–1524 (SSKKRGRRRKKTPPHIAKARK) show a composition bias toward basic residues. Residues 1508–1516 (RGRRRKKTP) form a sex determination domain region. The span at 1585 to 1598 (EDLHETERPGHVGE) shows a compositional bias: basic and acidic residues. Positions 1638–1648 (IQSQAGTNASP) are enriched in polar residues. 2 consecutive C2H2-type zinc fingers follow at residues 2078–2105 (HKCVQCSIRNQSVYFSSYSLLELHGKLH) and 2117–2141 (DDCQDCYETLTSSFEVIVHRINHHH). The interval 2080-2105 (CVQCSIRNQSVYFSSYSLLELHGKLH) is dosage compensation domain 2.

Component of the SDC complex, which consists of sdc-1, sdc-2 and sdc-3. Within the complex, interacts with sdc-1 and sdc-2. Interacts with dpy-21. Post-translationally, sumoylated. Sumoylation is important for assembly of the dosage compensation complex and its robust binding to the X chromosome. In terms of tissue distribution, expressed in somatic and in germline tissues in hermaphrodites (XX). In males (XO), only present in embryos younger than the 100-cell stage (at protein level).

Its subcellular location is the chromosome. The protein localises to the nucleus. Its function is as follows. Component of the SDC complex that functions in sex determination and in X chromosome dosage compensation specifically in hermaphrodite (XX) animals. Plays a central role in the recruitment of the condensin I-like dosage compensation complex to the male sex-determining autosomal gene her-1, thereby contributing to its repression and initiating hermaphrodite sexual development. Involved in the recruitment and assembly of the dosage compensation complex and the dosage compensation protein dpy-21 onto the X chromosomes in hermaphrodites, which leads to a reduction of X-linked gene transcription and an equalization of X-linked gene expression between the sexes. This Caenorhabditis elegans protein is Zinc finger protein sdc-3 (sdc-3).